A 1840-amino-acid chain; its full sequence is Neurexin 1 (1840 aa).

The segment at M1–S50 is disordered. Over M1 to M1696 the chain is Extracellular. Residues P24–A37 show a composition bias toward basic and acidic residues. In terms of domain architecture, Laminin G-like 1 spans G104–C289. The region spanning T309 to E347 is the EGF-like 1 domain. Disulfide bonds link C313-C325, C319-C334, C336-C346, C511-C547, C710-C739, C746-C757, C751-C766, and C768-C778. Laminin G-like domains follow at residues P352–C547 and D554–C739. The region spanning Q742–G779 is the EGF-like 2 domain. Laminin G-like domains are found at residues T784–A964 and H982–C1158. 4 disulfides stabilise this stretch: C1130-C1158, C1164-C1175, C1169-C1184, and C1186-C1196. The EGF-like 3 domain maps to G1160–Y1197. A Laminin G-like 6 domain is found at I1201–C1416. A disordered region spans residues G1411–P1651. Low complexity predominate over residues Q1447–T1472. The segment covering T1491 to Q1527 has biased composition (polar residues). Residues G1528 to A1600 show a composition bias toward low complexity. Positions R1632–P1646 are enriched in basic and acidic residues. The helical transmembrane segment at I1697–W1717 threads the bilayer. At L1718–V1840 the chain is on the cytoplasmic side. The tract at residues G1737 to V1840 is disordered. The segment covering G1747 to Q1757 has biased composition (polar residues). The span at Q1774–H1787 shows a compositional bias: low complexity. Positions N1788–S1813 are enriched in gly residues. Residues D1831 and D1834 each coordinate Zn(2+). Basic and acidic residues predominate over residues D1831 to V1840. Positions E1837–V1840 match the PDZ domain binding motif.

It belongs to the neurexin family. In terms of assembly, interacts (via C-terminal PDZ binding motif) with CASK (via PDZ domain). Interacts (via cytoplasmic domain) with apolpp/ApoLI; the interaction supports apolpp/ApoLI protein stability. Interact (via cytoplasmic domain) with Spn/Spinophilin. Interacts with RhoGAP100F/Syd-1 (via PDZ domain); RhoGAP100F/Syd-1 may recruit Nrx-1 to the presynaptic active zone. In terms of tissue distribution, expressed in brain, with expression in medulla, lamina, lobula, lobula plate, mushroom body and antennal lobe, and in retina (at protein level). Expressed in rabdomere of photoreceptor cells (at protein level).

Its subcellular location is the synaptic cell membrane. The protein localises to the presynaptic cell membrane. It localises to the postsynaptic cell membrane. Neuronal cell adhesion protein involved in synapse formation, development of synaptic active zones, synaptic regulation and visual function. Plays a role in cell adhesion between the pre- and the postsynaptic cell. Required for proper proliferation of synaptic boutons during larval development, a process necessary for coordinated matching of pre-and postsynaptic compartments. Promotes presynaptic active zone formation and neurotransmitter release. Spn/Spinophilin fine-tunes nrx-1/nlg1 signaling at the pre-synapse to control active zone number and functionality and thereby optimizing action potential-induced exocytosis. Required for synapse formation in central nervous system. By regulating synapse formation, may play a role in larval associative learning. Together with RhoGAP100F/syd-1, controls synapse formation at the neuromuscular junction. Essential for synaptic vesicle cycling, which plays critical roles in neurotransmission at neuromuscular junctions (NMJ). Regulated and restricts formation of glutamate receptor clusters. Mediates retinoid transport and subsequent rhodopsin maturation and may regulate lipoprotein function; thereby playing a role in vision. Regulates sleep, circadian rhythm and synaptic plasticity. Together with CASK, required for locomotion. This Drosophila melanogaster (Fruit fly) protein is Neurexin 1.